We begin with the raw amino-acid sequence, 169 residues long: S-ribosylhomocysteine lyase (169 aa).

3 residues coordinate Fe cation: His-54, His-58, and Cys-128.

This sequence belongs to the LuxS family. In terms of assembly, homodimer. The cofactor is Fe cation.

It carries out the reaction S-(5-deoxy-D-ribos-5-yl)-L-homocysteine = (S)-4,5-dihydroxypentane-2,3-dione + L-homocysteine. Functionally, involved in the synthesis of autoinducer 2 (AI-2) which is secreted by bacteria and is used to communicate both the cell density and the metabolic potential of the environment. The regulation of gene expression in response to changes in cell density is called quorum sensing. Catalyzes the transformation of S-ribosylhomocysteine (RHC) to homocysteine (HC) and 4,5-dihydroxy-2,3-pentadione (DPD). This chain is S-ribosylhomocysteine lyase, found in Shewanella piezotolerans (strain WP3 / JCM 13877).